A 109-amino-acid chain; its full sequence is Juvenile hormone esterase, isoform A (109 aa).

This sequence belongs to the type-B carboxylesterase/lipase family. In terms of tissue distribution, fat body, the site of their biosynthesis, and the hemolymph where it is secreted.

The enzyme catalyses juvenile hormone I + H2O = juvenile hormone I carboxylate + methanol + H(+). It catalyses the reaction juvenile hormone III + H2O = juvenile hormone III carboxylate + methanol + H(+). JH esterase plays a crucial role in the decrease of JH activity in lepidopteran insects, by hydrolyzing the methyl ester of JH. It is also involved in the transport of JH. The polypeptide is Juvenile hormone esterase, isoform A (Trichoplusia ni (Cabbage looper)).